A 116-amino-acid chain; its full sequence is Ribonuclease T (116 aa).

The region spanning 18–99 (KRAILVGHNS…YDTEKTAELF (82 aa)) is the Exonuclease domain. The Proton donor/acceptor role is filled by H86.

The protein belongs to the RNase T family. Homodimer.

Its function is as follows. Trims short 3' overhangs of a variety of RNA species, leaving a one or two nucleotide 3' overhang. Responsible for the end-turnover of tRNA: specifically removes the terminal AMP residue from uncharged tRNA (tRNA-C-C-A). Also appears to be involved in tRNA biosynthesis. The sequence is that of Ribonuclease T from Azotobacter vinelandii.